We begin with the raw amino-acid sequence, 427 residues long: Forkhead box protein A1-B (427 aa).

The fork-head DNA-binding region spans 157–251 (KPPYSYISLI…ENGCYLRRQK (95 aa)). Basic and acidic residues predominate over residues 256 to 272 (EKTQGGKGNQDGRKDHS). The interval 256–336 (EKTQGGKGNQ…HQNHSTHSLA (81 aa)) is disordered. The segment covering 285–302 (SSQMDSSSSMSNPSSSPQ) has biased composition (low complexity). Positions 323–334 (PLSSHQNHSTHS) are enriched in polar residues.

Present in the vegetal pole and marginal zone but not the animal pole of gastrulae and in equal levels in the dorsal and ventral halves of both gastrulae and neurulae. At neurula stage, expressed in the notochord. During tailbud stages, expressed in the foregut, brain, hypocord, neural floor plate and in two lines of cells just dorsal and ventral to the notochord. Expressed in the adult liver.

It localises to the nucleus. Its function is as follows. Probable transcription factor. The sequence is that of Forkhead box protein A1-B (foxa1-b) from Xenopus laevis (African clawed frog).